A 384-amino-acid chain; its full sequence is 3,7-dimethylxanthine N-methyltransferase 1 (384 aa).

Residues tyrosine 18, cysteine 61, asparagine 66, aspartate 100, leucine 101, serine 139, phenylalanine 140, and cysteine 156 each coordinate S-adenosyl-L-homocysteine. Tyrosine 157 contributes to the theobromine binding site. S-adenosyl-L-homocysteine is bound at residue cysteine 158. 2 residues coordinate theobromine: histidine 160 and tryptophan 161. Asparagine 178 contributes to the Mg(2+) binding site. Serine 237 is a binding site for theobromine. Aspartate 260, phenylalanine 262, and asparagine 263 together coordinate Mg(2+). Tyrosine 368 provides a ligand contact to theobromine.

This sequence belongs to the methyltransferase superfamily. Type-7 methyltransferase family. Requires Mg(2+) as cofactor. Highly expressed in developing endosperm and immature fruits (grains). Detected in young leaves and flower buds, but not in mature fruits.

The catalysed reaction is theobromine + S-adenosyl-L-methionine = caffeine + S-adenosyl-L-homocysteine + H(+). It carries out the reaction 1,7-dimethylxanthine + S-adenosyl-L-methionine = caffeine + S-adenosyl-L-homocysteine + H(+). The enzyme catalyses 7-methylxanthine + S-adenosyl-L-methionine = theobromine + S-adenosyl-L-homocysteine + H(+). The protein operates within alkaloid biosynthesis. Functionally, involved in the biosynthesis of caffeine. Catalyzes the conversion of 7-methylxanthine to caffeine, likely via theobromine as an intermediate. This chain is 3,7-dimethylxanthine N-methyltransferase 1, found in Coffea arabica (Arabian coffee).